We begin with the raw amino-acid sequence, 542 residues long: CTP synthase (542 aa).

The tract at residues 1-265 is amidoligase domain; the sequence is MARYIFITGG…DDEVLAAFGL (265 aa). Position 13 (S13) interacts with CTP. S13 is a binding site for UTP. 14-19 serves as a coordination point for ATP; that stretch reads SLGKGL. Y54 lines the L-glutamine pocket. D71 is a binding site for ATP. Positions 71 and 139 each coordinate Mg(2+). CTP-binding positions include 146–148, 186–191, and K222; these read DIE and KTKPTQ. UTP-binding positions include 186 to 191 and K222; that span reads KTKPTQ. Residue 238–240 participates in ATP binding; sequence RDA. The Glutamine amidotransferase type-1 domain maps to 290–541; sequence TIAIVGKYTG…IQAAVVQSRL (252 aa). Position 352 (G352) interacts with L-glutamine. Catalysis depends on C379, which acts as the Nucleophile; for glutamine hydrolysis. L-glutamine is bound by residues 380–383, E403, and R469; that span reads FGMQ. Residues H514 and E516 contribute to the active site.

This sequence belongs to the CTP synthase family. In terms of assembly, homotetramer.

It catalyses the reaction UTP + L-glutamine + ATP + H2O = CTP + L-glutamate + ADP + phosphate + 2 H(+). It carries out the reaction L-glutamine + H2O = L-glutamate + NH4(+). The enzyme catalyses UTP + NH4(+) + ATP = CTP + ADP + phosphate + 2 H(+). Its pathway is pyrimidine metabolism; CTP biosynthesis via de novo pathway; CTP from UDP: step 2/2. Allosterically activated by GTP, when glutamine is the substrate; GTP has no effect on the reaction when ammonia is the substrate. The allosteric effector GTP functions by stabilizing the protein conformation that binds the tetrahedral intermediate(s) formed during glutamine hydrolysis. Inhibited by the product CTP, via allosteric rather than competitive inhibition. Catalyzes the ATP-dependent amination of UTP to CTP with either L-glutamine or ammonia as the source of nitrogen. Regulates intracellular CTP levels through interactions with the four ribonucleotide triphosphates. The protein is CTP synthase of Nitrobacter hamburgensis (strain DSM 10229 / NCIMB 13809 / X14).